Consider the following 168-residue polypeptide: Protein GRE1 (168 aa).

Residues 1 to 168 (MSNLLNKFAD…DDDSGNQGVW (168 aa)) form a disordered region. Composition is skewed to basic and acidic residues over residues 8–20 (FADK…HDER) and 27–43 (DQTR…REFR). Composition is skewed to polar residues over residues 56 to 81 (NQGN…GNDF) and 120 to 144 (TSGQ…SNIG).

It is found in the cytoplasm. In Saccharomyces cerevisiae (strain ATCC 204508 / S288c) (Baker's yeast), this protein is Protein GRE1 (GRE1).